The primary structure comprises 1749 residues: MHLKHLRTLLSPQDGAAKVTCMAWSQNNAKFAVCTVDRVVLLYDEHGERRDKFSTKPADMKYGRKSYMVKGMAFSPDSTKIAIGQTDNIIYVYKIGEDWGDKKVICNKFIQTSAVTCLQWPAEYIIVFGLAEGKVRLANTKTNKSSTIYGTESYVVSLTTNCSGKGILSGHADGTIVRYFFDDEGSGESQGKLVNHPCPPYALAWATNSIVAAGCDRKIVAYGKEGHMLQTFDYSRDPQEREFTTAVSSPGGQSVVLGSYDRLRVFNWIPRRSIWEEAKPKEITNLYTITALAWKRDGSRLCVGTLCGGVEQFDCCLRRSIYKNKFELTYVGPSQVIVKNLSSGTRVVLKSHYGYEVEEVKILGKERYLVAHTSETLLLGDLNTNRLSEIAWQGSGGNEKYFFENENVCMIFNAGELTLVEYGNNDTLGSVRTEFMNPHLISVRINERCQRGTEDNKKLAYLIDIKTIAIVDLIGGYNIGTVSHESRVDWLELNETGHKLLFRDRKLRLHLYDIESCSKTMILNFCSYMQWVPGSDVLVAQNRNSLCVWYNIEAPERVTMFTIRGDVIGLERGGGKTEVMVMEGVTTVAYTLDEGLIEFGTAIDDGNYIRATAFLETLEMTPETEAMWKTLSKLALEARQLHIAERCFSALGQVAKARFLHETNEIADQVSREYGGEGTDFYQVRARLAMLEKNYKLAEMIFLEQNAVEEAMGMYQELHRWDECIAVAEAKGHPALEKLRRSYYQWLMDTQQEERAGELQESQGDGLAAISLYLKAGLPAKAARLVLTREELLANTELVEHITAALIKGELYERAGDLFEKIHNPQKALECYRKGNAFMKAVELARLAFPVEVVKLEEAWGDHLVQQKQLDAAINHYIEARCSIKAIEAALGARQWKKAIYILDLQDRNTASKYYPLVAQHYASLQEYEIAEELYTKGDRTKDAIDMYTQAGRWEQAHKLAMKCMRPEDVSVLYITQAQEMEKQGKYREAERLYVTVQEPDLAITMYKKHKLYDDMIRLVGKHHPDLLSDTHLHLGKELEAEGRLQEAEYHYLEAQEWKATVNMYRASGLWEEAYRVARTQGGANAHKHVAYLWAKSLGGEAAVRLLNKLGLLEAAVDHAADNCSFEFAFELSRLALKHKTPEVHLKYAMFLEDEGKFEEAEAEFIRAGKPKEAVLMFVHNQDWEAAQRVAEAHDPDSVAEVLVGQARGALEEKDFQKAEGLLLRAQRPGLALNYYKEAGLWSDALRICKDYVPSQLEALQEEYEREATKKGARGVEGFVEQARHWEQAGEYSRAVDCYLKVRDSGNSGLAEKCWMKAAELSIKFLPPQRNMEVVLAVGPQLIGIGKHSAAAELYLNLDLVKEAIDAFIEGEEWNKAKRVAKELDPRYEDYVDQHYKEFLKNQGKVDSLVGVDVIAALDLYVEQGQWDKCIETATKQNYKILHKYVALYATHLIREGSSAQALALYVQHGAPANPQNFNIYKRIFTDMVSSPGTNCAEAYHSWADLRDVLFNLCENLVKSSEANSPAHEEFKTMLLIAHYYATRSAAQSVKQLETVAARLSVSLLRHTQLLPVDKAFYEAGIAAKAVGWDNMAFIFLNRFLDLTDAIEEGTLDGLDHSDFQDTDIPFEVPLPAKQHVPEAEREEVRDWVLTVSMDQRLEQVLPRDERGAYEASLVAASTGVRALPCLITGYPILRNKIEFKRPGKAANKDNWNKFLMAIKTSHSPVCQDVLKFISQWCGGLPSTSFSFQ.

Residue M1 is modified to N-acetylmethionine. K4 participates in a covalent cross-link: Glycyl lysine isopeptide (Lys-Gly) (interchain with G-Cter in SUMO1). WD repeat units follow at residues 14–53 (DGAA…RDKF), 64–103 (RKSY…GDKK), 110–148 (IQTS…SSTI), 150–191 (GTES…ESQG), 195–233 (NHPC…QTFD), 238–278 (PQER…WEEA), 284–323 (TNLY…SIYK), 483–520 (SHES…CSKT), and 521–559 (MILN…ERVT). The stretch at 593-624 (DEGLIEFGTAIDDGNYIRATAFLETLEMTPET) is one TPR 1 repeat. R672 is modified (omega-N-methylarginine). TPR repeat units lie at residues 692–725 (EKNY…DECI), 809–842 (GELY…MKAV), 854–887 (VKLE…IKAI), 912–945 (SKYY…KDAI), 947–970 (MYTQ…PEDV), 971–1004 (SVLY…DLAI), 1042–1075 (EGRL…EEAY), 1142–1175 (PEVH…KEAV), 1276–1309 (VEGF…GNSG), 1345–1378 (IGKH…NKAK), 1411–1445 (GVDV…LHKY), 1447–1477 (ALYA…NPQN), and 1574–1607 (DKAF…TDAI).

Belongs to the IFT172 family. As to quaternary structure, interacts with IFT88. Interacts with IFT57. Interacts with RABL2/RABL2A; binds preferentially to GDP-bound RABL2.

The protein localises to the cell projection. The protein resides in the cilium. Required for the maintenance and formation of cilia. Plays an indirect role in hedgehog (Hh) signaling, cilia being required for all activity of the hedgehog pathway. The protein is Intraflagellar transport protein 172 homolog (IFT172) of Homo sapiens (Human).